A 349-amino-acid polypeptide reads, in one-letter code: tRNA N6-adenosine threonylcarbamoyltransferase (349 aa).

Positions 114 and 118 each coordinate Fe cation. Substrate is bound by residues 136–140 (IMSGG), Asp169, Gly182, and Asn280. Fe cation is bound at residue Asp308.

Belongs to the KAE1 / TsaD family. Requires Fe(2+) as cofactor.

The protein localises to the cytoplasm. It carries out the reaction L-threonylcarbamoyladenylate + adenosine(37) in tRNA = N(6)-L-threonylcarbamoyladenosine(37) in tRNA + AMP + H(+). In terms of biological role, required for the formation of a threonylcarbamoyl group on adenosine at position 37 (t(6)A37) in tRNAs that read codons beginning with adenine. Is involved in the transfer of the threonylcarbamoyl moiety of threonylcarbamoyl-AMP (TC-AMP) to the N6 group of A37, together with TsaE and TsaB. TsaD likely plays a direct catalytic role in this reaction. This is tRNA N6-adenosine threonylcarbamoyltransferase from Ehrlichia chaffeensis (strain ATCC CRL-10679 / Arkansas).